The primary structure comprises 154 residues: Large ribosomal subunit protein uL15 (154 aa).

Over residues 1–13 (MKLNELRDHEGAT) the composition is skewed to basic and acidic residues. Residues 1-44 (MKLNELRDHEGATKNRKRIGRGIGSGTGKTGGCGVKGQKSRSGV) form a disordered region. The segment covering 21-35 (RGIGSGTGKTGGCGV) has biased composition (gly residues).

This sequence belongs to the universal ribosomal protein uL15 family. Part of the 50S ribosomal subunit.

Functionally, binds to the 23S rRNA. In Bartonella bacilliformis (strain ATCC 35685 / KC583 / Herrer 020/F12,63), this protein is Large ribosomal subunit protein uL15.